Consider the following 132-residue polypeptide: Protein NrdI (132 aa).

It belongs to the NrdI family.

Probably involved in ribonucleotide reductase function. The protein is Protein NrdI of Staphylococcus haemolyticus (strain JCSC1435).